We begin with the raw amino-acid sequence, 308 residues long: Cytochrome b (308 aa).

4 helical membrane-spanning segments follow: residues 1–21 (FGSL…LLAM), 45–66 (WLIR…YLHI), 81–101 (WNIG…GYVL), and 146–166 (FFAF…VHLT). Heme b is bound by residues His51 and His65. Residues His150 and His164 each coordinate heme b. His169 lines the a ubiquinone pocket. 3 helical membrane passes run 194–214 (IKDL…ALFS), 256–276 (LGGV…PLLH), and 288–308 (LSQI…WVGS).

This sequence belongs to the cytochrome b family. As to quaternary structure, the cytochrome bc1 complex contains 11 subunits: 3 respiratory subunits (MT-CYB, CYC1 and UQCRFS1), 2 core proteins (UQCRC1 and UQCRC2) and 6 low-molecular weight proteins (UQCRH/QCR6, UQCRB/QCR7, UQCRQ/QCR8, UQCR10/QCR9, UQCR11/QCR10 and a cleavage product of UQCRFS1). This cytochrome bc1 complex then forms a dimer. Requires heme b as cofactor.

The protein localises to the mitochondrion inner membrane. Functionally, component of the ubiquinol-cytochrome c reductase complex (complex III or cytochrome b-c1 complex) that is part of the mitochondrial respiratory chain. The b-c1 complex mediates electron transfer from ubiquinol to cytochrome c. Contributes to the generation of a proton gradient across the mitochondrial membrane that is then used for ATP synthesis. The chain is Cytochrome b (MT-CYB) from Corvus corax (Common raven).